The following is a 200-amino-acid chain: ATP synthase subunit s, mitochondrial (200 aa).

Residues 1–25 (MMLFGKISQQLCGLKKLPWSRDSRY) constitute a mitochondrion transit peptide. Residues 1-61 (MMLFGKISQQ…SEWLLRCGAM (61 aa)) form an N-terminal domain region. Gly59 contacts Mg(2+). 4 LRR repeats span residues 62-87 (VRYH…KYKI), 88-116 (QAID…KIRL), 117-141 (CKCH…KSML), and 142-173 (EMEI…LSDL). Residue Thr93 participates in Mg(2+) binding.

The protein belongs to the ATP synthase subunit s family. Homotetramer. Associates with ATP synthase.

The protein localises to the mitochondrion. It is found in the mitochondrion inner membrane. Involved in regulation of mitochondrial membrane ATP synthase. Necessary for H(+) conduction of ATP synthase. Facilitates energy-driven catalysis of ATP synthesis by blocking a proton leak through an alternative proton exit pathway. The polypeptide is ATP synthase subunit s, mitochondrial (DMAC2L) (Bos taurus (Bovine)).